Here is a 66-residue protein sequence, read N- to C-terminus: Phylloseptin-H7 (66 aa).

The first 22 residues, 1–22 (MAFLKKSLFLVLFLGLVSLSIC), serve as a signal peptide directing secretion. A propeptide spanning residues 23-44 (EEEKRETEEEENDQEEDDKSEE) is cleaved from the precursor. The interval 25–44 (EKRETEEEENDQEEDDKSEE) is disordered. Residues 30–41 (EEEENDQEEDDK) show a composition bias toward acidic residues. Leu65 carries the leucine amide modification.

In terms of tissue distribution, expressed by the skin glands.

It is found in the secreted. In terms of biological role, has antimicrobial activity. The chain is Phylloseptin-H7 from Pithecopus hypochondrialis (Orange-legged leaf frog).